The primary structure comprises 444 residues: Trigger factor (444 aa).

In terms of domain architecture, PPIase FKBP-type spans 166-251 (GDQVVIDFKG…VKAVKAPKAA (86 aa)).

This sequence belongs to the FKBP-type PPIase family. Tig subfamily.

The protein localises to the cytoplasm. It carries out the reaction [protein]-peptidylproline (omega=180) = [protein]-peptidylproline (omega=0). In terms of biological role, involved in protein export. Acts as a chaperone by maintaining the newly synthesized protein in an open conformation. Functions as a peptidyl-prolyl cis-trans isomerase. The sequence is that of Trigger factor from Cereibacter sphaeroides (strain KD131 / KCTC 12085) (Rhodobacter sphaeroides).